The sequence spans 665 residues: Envelope glycoprotein (665 aa).

The first 33 residues, 1-33 (MARSTLSKPLKNKVNPRGPLIPLILLMLRGVST), serve as a signal peptide directing secretion. A receptor-binding domain (RBD) region spans residues 34 to 267 (ASPGSSPHQV…RYQNLGPRVP (234 aa)). The Extracellular segment spans residues 34–610 (ASPGSSPHQV…FNRSPWFTTL (577 aa)). N45 carries N-linked (GlcNAc...) asparagine; by host glycosylation. Cystine bridges form between C79-C129, C105-C118, C106-C114, C152-C172, and C164-C177. Zn(2+) is bound at residue D117. Residue N199 is glycosylated (N-linked (GlcNAc...) asparagine; by host). C209 and C215 form a disulfide bridge. The segment at 268-309 (IGPNPVLADQQPLSKPKPVKSPSVTKPPSGTPLSPTQLPPAG) is disordered. The span at 281 to 299 (SKPKPVKSPSVTKPPSGTP) shows a compositional bias: low complexity. Residue N326 is glycosylated (N-linked (GlcNAc...) asparagine; by host). 6 cysteine pairs are disulfide-bonded: C336–C339, C336–C563, C366–C420, C385–C397, C427–C440, and C555–C562. The short motif at 336–339 (CWLC) is the CXXC element. Residues N358 and N365 are each glycosylated (N-linked (GlcNAc...) asparagine; by host). N398 and N434 each carry an N-linked (GlcNAc...) asparagine; by host glycan. The tract at residues 472–492 (VSLTLALLLGGLTMGGIAAGI) is fusion peptide. A coiled-coil region spans residues 500–537 (MATQQFQQLQAAVQDDLREVEKSISNLEKSLTSLSEVV). Residues 538-554 (LQNRRGLDLLFLKEGGL) are immunosuppression. A CX6CC motif is present at residues 555–563 (CAALKEECC). A helical membrane pass occupies residues 611 to 631 (ISTIMGPLIVLLMILLFGPCI). C630 carries the S-palmitoyl cysteine; by host lipid modification. The Cytoplasmic portion of the chain corresponds to 632–665 (LNRLVQFVKDRISVVQALVLTQQYHQLKPIEYEP). The YXXL motif; contains endocytosis signal motif lies at 655 to 658 (YHQL).

The mature envelope protein (Env) consists of a trimer of SU-TM heterodimers attached by a labile interchain disulfide bond. The activated Env consists of SU monomers and TM trimers. In terms of processing, specific enzymatic cleavages in vivo yield mature proteins. Envelope glycoproteins are synthesized as an inactive precursor that is N-glycosylated and processed likely by host cell furin or by a furin-like protease in the Golgi to yield the mature SU and TM proteins. The cleavage site between SU and TM requires the minimal sequence [KR]-X-[KR]-R. The R-peptide is released from the C-terminus of the cytoplasmic tail of the TM protein upon particle formation as a result of proteolytic cleavage by the viral protease. Cleavage of this peptide is required for TM to become fusogenic. The CXXC motif is highly conserved across a broad range of retroviral envelope proteins. It is thought to participate in the formation of a labile disulfide bond possibly with the CX6CC motif present in the transmembrane protein. Isomerization of the intersubunit disulfide bond to an SU intrachain disulfide bond is thought to occur upon receptor recognition in order to allow membrane fusion. Post-translationally, the transmembrane protein is palmitoylated. In terms of processing, the R-peptide is palmitoylated.

It localises to the virion membrane. Its subcellular location is the host cell membrane. Its function is as follows. The surface protein (SU) attaches the virus to the host cell by binding to its receptor. Interaction with HECT ubiquitin ligases activates a thiol in a CXXC motif of the C-terminal domain, where the other Cys residue participates in the formation of the intersubunit disulfide. The activated thiol will attack the disulfide and cause its isomerization into a disulfide isomer within the motif. This leads to SU displacement and TM refolding, and is thought to activate its fusogenic potential by unmasking its fusion peptide. Fusion occurs at the host cell plasma membrane. In terms of biological role, the transmembrane protein (TM) acts as a class I viral fusion protein. Under the current model, the protein has at least 3 conformational states: pre-fusion native state, pre-hairpin intermediate state, and post-fusion hairpin state. During viral and target cell membrane fusion, the coiled coil regions (heptad repeats) assume a trimer-of-hairpins structure, positioning the fusion peptide in close proximity to the C-terminal region of the ectodomain. The formation of this structure appears to drive apposition and subsequent fusion of viral and target cell membranes. Membranes fusion leads to delivery of the nucleocapsid into the cytoplasm. The chain is Envelope glycoprotein (env) from Mus musculus (Mouse).